A 101-amino-acid polypeptide reads, in one-letter code: Small ribosomal subunit protein uS14A (101 aa).

A disordered region spans residues 29 to 73 (AIISSPSTPADARAAAQSELNRQPRDASPVRVRNRDAVDGRPRGH). Residues 61 to 70 (RNRDAVDGRP) are compositionally biased toward basic and acidic residues.

It belongs to the universal ribosomal protein uS14 family. Part of the 30S ribosomal subunit. Contacts proteins S3 and S10.

Functionally, binds 16S rRNA, required for the assembly of 30S particles and may also be responsible for determining the conformation of the 16S rRNA at the A site. This is Small ribosomal subunit protein uS14A from Mycolicibacterium gilvum (strain PYR-GCK) (Mycobacterium gilvum (strain PYR-GCK)).